A 100-amino-acid polypeptide reads, in one-letter code: MGALTKAEIAERLYEELGLNKREAKELVELFFEEIRQALEHNEQVKLSGFGNFDLRDKRQRPGRNPKTGEEIPITARRVVTFRPGQKLKARVEAYAGTKS.

The segment at 54 to 73 is disordered; the sequence is DLRDKRQRPGRNPKTGEEIP.

The protein belongs to the bacterial histone-like protein family. As to quaternary structure, heterodimer of an alpha and a beta chain.

In terms of biological role, this protein is one of the two subunits of integration host factor, a specific DNA-binding protein that functions in genetic recombination as well as in transcriptional and translational control. In Pseudomonas aeruginosa (strain UCBPP-PA14), this protein is Integration host factor subunit alpha.